Reading from the N-terminus, the 194-residue chain is Fibroblast growth factor 7 (194 aa).

An N-terminal signal peptide occupies residues 1-31 (MRKWILTRILPTPLYRPCFHLVCLVGTISLA). 2 N-linked (GlcNAc...) asparagine glycosylation sites follow: Asn45 and Asn149.

It belongs to the heparin-binding growth factors family. In terms of assembly, interacts with FGFBP1. Interacts with FGFR2. Affinity between fibroblast growth factors (FGFs) and their receptors is increased by heparan sulfate glycosaminoglycans that function as coreceptors.

In terms of biological role, growth factor active on keratinocytes. Possible major paracrine effector of normal epithelial cell proliferation. The sequence is that of Fibroblast growth factor 7 (Fgf7) from Rattus norvegicus (Rat).